The primary structure comprises 269 residues: Shikimate dehydrogenase (NADP(+)) (269 aa).

Shikimate is bound by residues S15 to S17 and T62. Residue K66 is the Proton acceptor of the active site. Shikimate contacts are provided by N86 and D100. NADP(+)-binding positions include G124–A128, N147–R152, and I211. Residue Y213 coordinates shikimate. Position 234 (G234) interacts with NADP(+).

It belongs to the shikimate dehydrogenase family. In terms of assembly, homodimer.

The enzyme catalyses shikimate + NADP(+) = 3-dehydroshikimate + NADPH + H(+). Its pathway is metabolic intermediate biosynthesis; chorismate biosynthesis; chorismate from D-erythrose 4-phosphate and phosphoenolpyruvate: step 4/7. Functionally, involved in the biosynthesis of the chorismate, which leads to the biosynthesis of aromatic amino acids. Catalyzes the reversible NADPH linked reduction of 3-dehydroshikimate (DHSA) to yield shikimate (SA). The polypeptide is Shikimate dehydrogenase (NADP(+)) (Methanococcoides burtonii (strain DSM 6242 / NBRC 107633 / OCM 468 / ACE-M)).